The following is a 154-amino-acid chain: Small ribosomal subunit protein uS7 (154 aa).

Belongs to the universal ribosomal protein uS7 family. Part of the 30S ribosomal subunit. Contacts proteins S9 and S11.

Functionally, one of the primary rRNA binding proteins, it binds directly to 16S rRNA where it nucleates assembly of the head domain of the 30S subunit. Is located at the subunit interface close to the decoding center, probably blocks exit of the E-site tRNA. The protein is Small ribosomal subunit protein uS7 of Karelsulcia muelleri (strain GWSS) (Sulcia muelleri).